The sequence spans 204 residues: CASP-like protein 2U1 (204 aa).

Topologically, residues Met-1–Lys-36 are cytoplasmic. Residues Gly-37–Leu-57 form a helical membrane-spanning segment. The Extracellular segment spans residues Lys-58–Ser-84. A glycan (N-linked (GlcNAc...) asparagine) is linked at Asn-77. Residues Leu-85 to Leu-105 traverse the membrane as a helical segment. Residues Ser-106–Thr-117 are Cytoplasmic-facing. Residues Val-118–Ala-138 traverse the membrane as a helical segment. The Extracellular segment spans residues Ala-139 to His-170. Residues Phe-171–Ile-191 traverse the membrane as a helical segment. Topologically, residues Ser-192–Lys-204 are cytoplasmic.

This sequence belongs to the Casparian strip membrane proteins (CASP) family. As to quaternary structure, homodimer and heterodimers.

It is found in the cell membrane. The polypeptide is CASP-like protein 2U1 (Selaginella moellendorffii (Spikemoss)).